Reading from the N-terminus, the 199-residue chain is Cytochrome c oxidase assembly protein CtaG (199 aa).

Residues methionine 1 to arginine 12 are Cytoplasmic-facing. Residues alanine 13–alanine 35 traverse the membrane as a helical; Signal-anchor for type II membrane protein segment. Residues valine 36 to leucine 199 lie on the Periplasmic side of the membrane.

It belongs to the COX11/CtaG family.

Its subcellular location is the cell inner membrane. Its function is as follows. Exerts its effect at some terminal stage of cytochrome c oxidase synthesis, probably by being involved in the insertion of the copper B into subunit I. The polypeptide is Cytochrome c oxidase assembly protein CtaG (Sinorhizobium fredii (strain NBRC 101917 / NGR234)).